The chain runs to 997 residues: Translation initiation factor IF-2 (997 aa).

The segment at 101–406 (ELAAEQAAAR…SRNQHQDRRH (306 aa)) is disordered. 2 stretches are compositionally biased toward low complexity: residues 116–185 (AEAV…QAEP) and 195–209 (AAPA…EPAK). Polar residues predominate over residues 231–242 (TELTSQTPTPVA). A compositionally biased stretch (low complexity) spans 256–280 (AEPAAAPKTTAKPGEIRRAAAPAAP). The span at 281-292 (DRAREEARRAAE) shows a compositional bias: basic and acidic residues. Over residues 385–394 (RAGGKGGRGG) the composition is skewed to gly residues. The 168-residue stretch at 498–665 (PRAPVVTVMG…NVLLQAEILE (168 aa)) folds into the tr-type G domain. The interval 507-514 (GHVDHGKT) is G1. 507 to 514 (GHVDHGKT) is a GTP binding site. Residues 532 to 536 (GITQH) form a G2 region. The segment at 553–556 (DTPG) is G3. GTP is bound by residues 553-557 (DTPGH) and 607-610 (NKID). Residues 607 to 610 (NKID) are G4. A G5 region spans residues 643–645 (SAK).

The protein belongs to the TRAFAC class translation factor GTPase superfamily. Classic translation factor GTPase family. IF-2 subfamily.

The protein localises to the cytoplasm. Its function is as follows. One of the essential components for the initiation of protein synthesis. Protects formylmethionyl-tRNA from spontaneous hydrolysis and promotes its binding to the 30S ribosomal subunits. Also involved in the hydrolysis of GTP during the formation of the 70S ribosomal complex. The sequence is that of Translation initiation factor IF-2 from Bordetella pertussis (strain Tohama I / ATCC BAA-589 / NCTC 13251).